The following is a 516-amino-acid chain: Delta(24)-sterol reductase (516 aa).

The signal sequence occupies residues 1-22; that stretch reads MEPAVSLAVCALLFLLWVRLKG. Residues 23–31 lie on the Lumenal side of the membrane; it reads LEFVLIHQR. Residues 32 to 52 form a helical membrane-spanning segment; it reads WVFVCLFLLPLSLIFDIYYYV. Residues 53 to 516 lie on the Cytoplasmic side of the membrane; sequence RAWVVFKLSS…YDKICKAARH (464 aa). The 177-residue stretch at 58–234 folds into the FAD-binding PCMH-type domain; the sequence is FKLSSAPRLH…VAAEIRIIPA (177 aa). 163–175 is a binding site for FAD; the sequence is TVGGLIMGTGIES.

It belongs to the FAD-binding oxidoreductase/transferase type 4 family. Interacts with DHCR7; this interaction regulates DHCR7 activity. It depends on FAD as a cofactor. As to expression, highly expressed in brain and adrenal gland with moderate expression in liver, lung, spleen, prostate and spinal cord. Low expression in heart, uterus and prostate. Undetectable in blood cells. In the brain, strongly expressed in cortical regions, substantia nigra, caudate nucleus, hippocampus, medulla oblongata and pons. In brains affected by Alzheimer disease, expression in the inferior temporal lobe is substantially lower than in the frontal cortex.

It localises to the endoplasmic reticulum membrane. The protein localises to the golgi apparatus membrane. It catalyses the reaction cholesterol + NADP(+) = desmosterol + NADPH + H(+). The catalysed reaction is lanosterol + NADPH + H(+) = 24,25-dihydrolanosterol + NADP(+). It carries out the reaction 5alpha-cholest-8-en-3beta-ol + NADP(+) = zymosterol + NADPH + H(+). It functions in the pathway steroid biosynthesis; cholesterol biosynthesis. Its function is as follows. Catalyzes the reduction of the delta-24 double bond of sterol intermediates during cholesterol biosynthesis. In addition to its cholesterol-synthesizing activity, can protect cells from oxidative stress by reducing caspase 3 activity during apoptosis induced by oxidative stress. Also protects against amyloid-beta peptide-induced apoptosis. The sequence is that of Delta(24)-sterol reductase (DHCR24) from Homo sapiens (Human).